Consider the following 116-residue polypeptide: Large ribosomal subunit protein uL22 (116 aa).

This sequence belongs to the universal ribosomal protein uL22 family. In terms of assembly, part of the 50S ribosomal subunit.

This protein binds specifically to 23S rRNA; its binding is stimulated by other ribosomal proteins, e.g. L4, L17, and L20. It is important during the early stages of 50S assembly. It makes multiple contacts with different domains of the 23S rRNA in the assembled 50S subunit and ribosome. In terms of biological role, the globular domain of the protein is located near the polypeptide exit tunnel on the outside of the subunit, while an extended beta-hairpin is found that lines the wall of the exit tunnel in the center of the 70S ribosome. In Gloeobacter violaceus (strain ATCC 29082 / PCC 7421), this protein is Large ribosomal subunit protein uL22.